Reading from the N-terminus, the 199-residue chain is Acireductone dioxygenase 2 (199 aa).

Fe(2+) is bound by residues His-98, His-100, Glu-104, and His-143. Ni(2+) contacts are provided by His-98, His-100, Glu-104, and His-143.

This sequence belongs to the acireductone dioxygenase (ARD) family. Fe(2+) is required as a cofactor. It depends on Ni(2+) as a cofactor.

The protein resides in the cytoplasm. Its subcellular location is the nucleus. The catalysed reaction is 1,2-dihydroxy-5-(methylsulfanyl)pent-1-en-3-one + O2 = 4-methylsulfanyl-2-oxobutanoate + formate + 2 H(+). It carries out the reaction 1,2-dihydroxy-5-(methylsulfanyl)pent-1-en-3-one + O2 = 3-(methylsulfanyl)propanoate + CO + formate + 2 H(+). Its pathway is amino-acid biosynthesis; L-methionine biosynthesis via salvage pathway; L-methionine from S-methyl-5-thio-alpha-D-ribose 1-phosphate: step 5/6. In terms of biological role, catalyzes 2 different reactions between oxygen and the acireductone 1,2-dihydroxy-3-keto-5-methylthiopentene (DHK-MTPene) depending upon the metal bound in the active site. Fe-containing acireductone dioxygenase (Fe-ARD) produces formate and 2-keto-4-methylthiobutyrate (KMTB), the alpha-ketoacid precursor of methionine in the methionine recycle pathway. Ni-containing acireductone dioxygenase (Ni-ARD) produces methylthiopropionate, carbon monoxide and formate, and does not lie on the methionine recycle pathway. The sequence is that of Acireductone dioxygenase 2 from Vitis vinifera (Grape).